A 390-amino-acid polypeptide reads, in one-letter code: MNLHEYQSKHLLKKYNIPVPASEVVFNPDAAVDAAAKIGGDRWVVKAQVHAGGRGKAGGVRLVKNKEELKSAVKALLGTRLVTYQTDERGQPVNQILVEQTSDIARELYLGAVIDRASQRIVFMASTEGGVEIEKVAEKSPEKILKVTIDPAIGLQPFQCRQLFFGLGLQDLKQMRSFTDIVMGLYRLFTERDLSLLEINPLVITGSGELICLDAKINIDDSALYRQSELREMRDTTQEDEHETMAQQWELNYIKLDGNIGCMVNGAGLAMATMDLIKLSGGDPANFLDVGGSATKERVTEAFKIIVSDKNVKGILVNIFGGIVRCDLIADGIISAVKEVGIDVPVVVRLEGNNAQLGAKKLADSGMNIIAAKGFADAAEQIVKQVGVIA.

The region spanning 9-245 (KHLLKKYNIP…TTQEDEHETM (237 aa)) is the ATP-grasp domain. ATP is bound by residues Lys-46, 53–55 (GRG), Glu-99, Ser-102, and Glu-107. The Mg(2+) site is built by Asn-200 and Asp-214. Residues Asn-265 and 322 to 324 (GIV) each bind substrate.

The protein belongs to the succinate/malate CoA ligase beta subunit family. As to quaternary structure, heterotetramer of two alpha and two beta subunits. Requires Mg(2+) as cofactor.

It carries out the reaction succinate + ATP + CoA = succinyl-CoA + ADP + phosphate. The catalysed reaction is GTP + succinate + CoA = succinyl-CoA + GDP + phosphate. The protein operates within carbohydrate metabolism; tricarboxylic acid cycle; succinate from succinyl-CoA (ligase route): step 1/1. In terms of biological role, succinyl-CoA synthetase functions in the citric acid cycle (TCA), coupling the hydrolysis of succinyl-CoA to the synthesis of either ATP or GTP and thus represents the only step of substrate-level phosphorylation in the TCA. The beta subunit provides nucleotide specificity of the enzyme and binds the substrate succinate, while the binding sites for coenzyme A and phosphate are found in the alpha subunit. The protein is Succinate--CoA ligase [ADP-forming] subunit beta of Coxiella burnetii (strain RSA 493 / Nine Mile phase I).